The sequence spans 322 residues: tRNA dimethylallyltransferase (322 aa).

19–26 (GPTASGKT) provides a ligand contact to ATP. 21–26 (TASGKT) contributes to the substrate binding site. Interaction with substrate tRNA regions lie at residues 44–47 (DSAL), 168–172 (QRIQR), and 255–260 (RCVGYR).

It belongs to the IPP transferase family. Monomer. Mg(2+) serves as cofactor.

It carries out the reaction adenosine(37) in tRNA + dimethylallyl diphosphate = N(6)-dimethylallyladenosine(37) in tRNA + diphosphate. Its function is as follows. Catalyzes the transfer of a dimethylallyl group onto the adenine at position 37 in tRNAs that read codons beginning with uridine, leading to the formation of N6-(dimethylallyl)adenosine (i(6)A). The protein is tRNA dimethylallyltransferase of Cupriavidus taiwanensis (strain DSM 17343 / BCRC 17206 / CCUG 44338 / CIP 107171 / LMG 19424 / R1) (Ralstonia taiwanensis (strain LMG 19424)).